Consider the following 500-residue polypeptide: ATP synthase subunit beta (500 aa).

Position 157–164 (157–164 (GGAGVGKT)) interacts with ATP.

The protein belongs to the ATPase alpha/beta chains family. In terms of assembly, F-type ATPases have 2 components, CF(1) - the catalytic core - and CF(0) - the membrane proton channel. CF(1) has five subunits: alpha(3), beta(3), gamma(1), delta(1), epsilon(1). CF(0) has three main subunits: a(1), b(2) and c(9-12). The alpha and beta chains form an alternating ring which encloses part of the gamma chain. CF(1) is attached to CF(0) by a central stalk formed by the gamma and epsilon chains, while a peripheral stalk is formed by the delta and b chains.

The protein resides in the cell inner membrane. The catalysed reaction is ATP + H2O + 4 H(+)(in) = ADP + phosphate + 5 H(+)(out). Its function is as follows. Produces ATP from ADP in the presence of a proton gradient across the membrane. The catalytic sites are hosted primarily by the beta subunits. This chain is ATP synthase subunit beta, found in Salinibacter ruber (strain DSM 13855 / M31).